The sequence spans 209 residues: Superoxide dismutase [Mn/Fe] (209 aa).

His38, His90, Asp172, and His176 together coordinate Fe(3+). Mn(2+)-binding residues include His38, His90, Asp172, and His176.

Belongs to the iron/manganese superoxide dismutase family. Mn(2+) serves as cofactor. It depends on Fe(3+) as a cofactor.

The enzyme catalyses 2 superoxide + 2 H(+) = H2O2 + O2. Destroys superoxide anion radicals which are normally produced within the cells and which are toxic to biological systems. Catalyzes the dismutation of superoxide anion radicals into O2 and H2O2 by successive reduction and oxidation of the transition metal ion at the active site. The sequence is that of Superoxide dismutase [Mn/Fe] (sodB) from Rickettsia bellii (strain RML369-C).